Reading from the N-terminus, the 547-residue chain is MNAFTRAWYALERHYQDTRHVLLRDRFACEPDRFERMHERLDGMLFDYSKNRLGEDTLQLLCNLADAADLEGKMRALRTGAKVNGSEGRAALHTALRLPDGADAVYVDGRDVLPEIRRELNRALKFAHSLDDGSYQGITGKRITDFVHIGIGGSDLGPAMCVQALEPFRRHITVHFAANADPACLDAVLCRLNPETTVFCVASKSFKTPETLLNAQAVKAWYRGAGFSESETACHFCAVSADTAAAAAFGIAAERVFAMYDWVGGRYSVWSPVGLPVMVAVGGARFRELLAGAHAMDRHFFSTPTRHNIPVLMALIAVWYNNFQHADGQTAVPYSHNLRLLPAWLNQLDMESLGKSRASDGSPAVCKTGGIVFGGEGVNCQHAYFQLLHQGTRLIPCDFIVPMTAQGREDGRSRFTVANAFAQAEALMKGKTLDEARAELADLPEAERERLAPHKEFPGNRPSNSILIDRLTPYNLGMLMAAYEHKTFVQGAIWNVNPFDQWGVEYGKQLAKTIIGELEGGTSVHDASTEGLMAFYRECRLKGGGAA.

The active-site Proton donor is Glu351. Active-site residues include His382 and Lys508.

The protein belongs to the GPI family.

The protein resides in the cytoplasm. It carries out the reaction alpha-D-glucose 6-phosphate = beta-D-fructose 6-phosphate. Its pathway is carbohydrate biosynthesis; gluconeogenesis. It functions in the pathway carbohydrate degradation; glycolysis; D-glyceraldehyde 3-phosphate and glycerone phosphate from D-glucose: step 2/4. In terms of biological role, catalyzes the reversible isomerization of glucose-6-phosphate to fructose-6-phosphate. The sequence is that of Glucose-6-phosphate isomerase 2 from Neisseria meningitidis serogroup B (strain ATCC BAA-335 / MC58).